A 1723-amino-acid polypeptide reads, in one-letter code: Lys-gingipain HG66 (1723 aa).

Residues 1-24 form the signal peptide; the sequence is MRKLLLLIAASLLGVGLYAQNAKI. The propeptide occupies 25-228; that stretch reads KLDAPTTRTT…ETAYKQLFNR (204 aa). Residues aspartate 313, aspartate 337, aspartate 339, phenylalanine 341, and glutamate 343 each contribute to the Ca(2+) site. The active-site Proton donor is histidine 444. Cysteine 477 (nucleophile) is an active-site residue. 2 residues coordinate Ca(2+): phenylalanine 482 and glutamate 491. The tract at residues 965–985 is disordered; it reads DAPNGTPNPNPNPNPGTTTLS. Ca(2+) contacts are provided by serine 987, glutamate 989, aspartate 1000, aspartate 1002, aspartate 1004, histidine 1006, serine 1021, glycine 1023, asparagine 1042, aspartate 1145, and glutamate 1146.

This sequence belongs to the peptidase C25 family. Proteolytically cleaved into a catalytic subunit and three adhesins. Arg-gingipain is involved in this post-translational processing.

The protein localises to the secreted. It catalyses the reaction Endopeptidase with strict specificity for lysyl bonds.. Cysteine proteinase with a strong preference for substrates with Lys in the P1 position. Hydrolyzes bovine hemoglobin, bovine serum albumin, casein, human placental type I collagen and human IgA and IgG. Disrupts the functions of polymorphonuclear leukocytes. May act as a virulence factor in the development of peridontal disease. Involved in the coaggregation of P.gingivalis with other oral bacteria. The sequence is that of Lys-gingipain HG66 from Porphyromonas gingivalis (Bacteroides gingivalis).